Here is a 357-residue protein sequence, read N- to C-terminus: Ribosomal RNA large subunit methyltransferase M (357 aa).

S-adenosyl-L-methionine contacts are provided by residues Ser-183, 216 to 219, Asp-235, Asp-255, and Asp-271; that span reads APGG. Lys-300 (proton acceptor) is an active-site residue.

This sequence belongs to the class I-like SAM-binding methyltransferase superfamily. RNA methyltransferase RlmE family. RlmM subfamily. As to quaternary structure, monomer.

It is found in the cytoplasm. The catalysed reaction is cytidine(2498) in 23S rRNA + S-adenosyl-L-methionine = 2'-O-methylcytidine(2498) in 23S rRNA + S-adenosyl-L-homocysteine + H(+). Its function is as follows. Catalyzes the 2'-O-methylation at nucleotide C2498 in 23S rRNA. This chain is Ribosomal RNA large subunit methyltransferase M, found in Pseudomonas fluorescens (strain ATCC BAA-477 / NRRL B-23932 / Pf-5).